The sequence spans 500 residues: Lysine--tRNA ligase (500 aa).

The Mg(2+) site is built by E406 and E413.

Belongs to the class-II aminoacyl-tRNA synthetase family. Homodimer. Requires Mg(2+) as cofactor.

The protein localises to the cytoplasm. The enzyme catalyses tRNA(Lys) + L-lysine + ATP = L-lysyl-tRNA(Lys) + AMP + diphosphate. This chain is Lysine--tRNA ligase, found in Sulfolobus acidocaldarius (strain ATCC 33909 / DSM 639 / JCM 8929 / NBRC 15157 / NCIMB 11770).